The primary structure comprises 236 residues: Phosphoribosylaminoimidazole-succinocarboxamide synthase (236 aa).

The protein belongs to the SAICAR synthetase family.

It catalyses the reaction 5-amino-1-(5-phospho-D-ribosyl)imidazole-4-carboxylate + L-aspartate + ATP = (2S)-2-[5-amino-1-(5-phospho-beta-D-ribosyl)imidazole-4-carboxamido]succinate + ADP + phosphate + 2 H(+). The protein operates within purine metabolism; IMP biosynthesis via de novo pathway; 5-amino-1-(5-phospho-D-ribosyl)imidazole-4-carboxamide from 5-amino-1-(5-phospho-D-ribosyl)imidazole-4-carboxylate: step 1/2. This is Phosphoribosylaminoimidazole-succinocarboxamide synthase from Campylobacter jejuni subsp. jejuni serotype O:6 (strain 81116 / NCTC 11828).